Consider the following 819-residue polypeptide: Probable beta-glucosidase G (819 aa).

Residues 1-20 form the signal peptide; it reads MTSASQILVWGLLAASGAQA. Residues Asn-41, Asn-59, Asn-107, Asn-228, and Asn-277 are each glycosylated (N-linked (GlcNAc...) asparagine). Residue Asp-305 is part of the active site. N-linked (GlcNAc...) asparagine glycosylation is found at Asn-337, Asn-344, Asn-351, Asn-403, Asn-500, Asn-509, Asn-554, Asn-567, Asn-588, Asn-627, Asn-683, and Asn-719.

It belongs to the glycosyl hydrolase 3 family.

Its subcellular location is the secreted. The enzyme catalyses Hydrolysis of terminal, non-reducing beta-D-glucosyl residues with release of beta-D-glucose.. The protein operates within glycan metabolism; cellulose degradation. Beta-glucosidases are one of a number of cellulolytic enzymes involved in the degradation of cellulosic biomass. Catalyzes the last step releasing glucose from the inhibitory cellobiose. This chain is Probable beta-glucosidase G (bglG), found in Emericella nidulans (strain FGSC A4 / ATCC 38163 / CBS 112.46 / NRRL 194 / M139) (Aspergillus nidulans).